The primary structure comprises 180 residues: Bifunctional protein PyrR (180 aa).

The short motif at 101–113 (VVLVDDVIFKGRT) is the PRPP-binding element.

The protein belongs to the purine/pyrimidine phosphoribosyltransferase family. PyrR subfamily.

The catalysed reaction is UMP + diphosphate = 5-phospho-alpha-D-ribose 1-diphosphate + uracil. Functionally, regulates the transcription of the pyrimidine nucleotide (pyr) operon in response to exogenous pyrimidines. In terms of biological role, also displays a weak uracil phosphoribosyltransferase activity which is not physiologically significant. The protein is Bifunctional protein PyrR of Trichormus variabilis (strain ATCC 29413 / PCC 7937) (Anabaena variabilis).